Reading from the N-terminus, the 153-residue chain is Histone H2B type W-T (153 aa).

Residues 1–54 are disordered; sequence MATASAMAGPSSETTSEEQLITQEPKEANSTTSQKQSKQRKRGRHGPRRCHSNC. Residues 11-36 are compositionally biased toward polar residues; it reads SSETTSEEQLITQEPKEANSTTSQKQ. Residues 37–52 show a composition bias toward basic residues; sequence SKQRKRGRHGPRRCHS.

It belongs to the histone H2B family. As to quaternary structure, can replace the conventional histone H2B in the nucleosome. The nucleosome is a histone octamer containing two molecules each of H2A, H2B, H3 and H4 assembled in one H3-H4 heterotetramer and two H2A-H2B heterodimers. The octamer wraps approximately 147 bp of DNA. Testis-specific (at protein level).

The protein resides in the nucleus membrane. It localises to the chromosome. It is found in the telomere. Its function is as follows. Atypical histone H2B that can form nucleosomes structurally and dynamically indistinguishable from those containing conventional H2B. Nucleosomes wrap and compact DNA into chromatin, limiting DNA accessibility to the cellular machineries which require DNA as a template. Histones thereby play a central role in transcription regulation, DNA repair, DNA replication and chromosomal stability. DNA accessibility is regulated via a complex set of post-translational modifications of histones, also called histone code, and nucleosome remodeling. However, unlike conventional H2B, does not recruit chromosome condensation factors and does not participate in the assembly of mitotic chromosomes. May be important for telomere function and play a role in spermatogenesis. The sequence is that of Histone H2B type W-T from Homo sapiens (Human).